A 603-amino-acid polypeptide reads, in one-letter code: Golgin subfamily A member 8B (603 aa).

Disordered stretches follow at residues 1-82 (MAEE…NSRS), 95-125 (LKQQ…ELEG), 398-419 (TSAE…ESSG), and 460-492 (PGDS…GAAG). Residues 46 to 66 (AASGGCHSSEASSSASSSLHA) are compositionally biased toward low complexity. Residues 69–82 (SPCQEQAAVLNSRS) show a composition bias toward polar residues. Coiled-coil stretches lie at residues 82-173 (SIKI…GELE) and 212-440 (LKGH…LELG). Residues 100-124 (KQVEHQLEEEKKANNEKQKAERELE) are compositionally biased toward basic and acidic residues. A compositionally biased stretch (gly residues) spans 469–482 (PGGGHHQAGPGQGG). The golgi-targeting domain stretch occupies residues 491–603 (AGDGVAACGS…CWAWLPRRRR (113 aa)).

Belongs to the GOLGA8 family. In terms of tissue distribution, highly expressed in brain, heart and kidney. Detected at lower levels in liver, thymus, spleen, lung and peripheral blood leukocytes.

Its subcellular location is the golgi apparatus. The protein resides in the golgi stack membrane. Functionally, may be involved in maintaining Golgi structure. The chain is Golgin subfamily A member 8B (GOLGA8B) from Homo sapiens (Human).